We begin with the raw amino-acid sequence, 1533 residues long: Protein TALPID3 (1533 aa).

Residues 32–57 (LSANKRLPVGTGTSLNGTSRGSSDLT) are disordered. The segment covering 42–57 (TGTSLNGTSRGSSDLT) has biased composition (polar residues). A coiled-coil region spans residues 182 to 223 (QSDLEAKVNSVTELLSKLQETDKHLQRVTEQQTSIQRKQEKL). A compositionally biased stretch (basic and acidic residues) spans 309-321 (KEVEDTSFDKQKS). Disordered stretches follow at residues 309-339 (KEVE…VSRD) and 377-400 (LTRK…TPEK). Residue Ser-406 is modified to Phosphoserine. Positions 467 to 501 (SVLKDAEKILRGVQNNKKVLEENLEAIIRAKDGAA) form a coiled coil. A required for centrosomal localization region spans residues 467 to 554 (SVLKDAEKIL…YEQKRFDQKN (88 aa)). The segment at 546-575 (EQKRFDQKNQRTKKGQNMTKDIRTNTQDKT) is disordered. Residues 560–575 (GQNMTKDIRTNTQDKT) are compositionally biased toward polar residues. Phosphothreonine is present on residues Thr-1042 and Thr-1046. Ser-1050 carries the phosphoserine modification. Phosphothreonine is present on Thr-1063. Ser-1066 carries the phosphoserine modification. Residues 1129–1156 (SSPELPKPWGDGDLPLEEENPNSPQEEL) form a disordered region.

The protein belongs to the TALPID3 family. Interacts with CCP110, CEP290, CEP97, KIF24. As to expression, ubiquitously expressed. Expressed in photoreceptor cells (at protein level).

The protein resides in the cytoplasm. The protein localises to the cytoskeleton. Its subcellular location is the microtubule organizing center. It is found in the centrosome. It localises to the photoreceptor inner segment. The protein resides in the centriole. The protein localises to the cilium basal body. Functionally, required for ciliogenesis and sonic hedgehog/SHH signaling. Required for the centrosomal recruitment of RAB8A and for the targeting of centriole satellite proteins to centrosomes such as of PCM1. May play a role in early ciliogenesis in the disappearance of centriolar satellites that preceeds ciliary vesicle formation. Involved in regulation of cell intracellular organization. Involved in regulation of cell polarity. Required for asymmetrical localization of CEP120 to daughter centrioles. In Homo sapiens (Human), this protein is Protein TALPID3 (KIAA0586).